The sequence spans 233 residues: Ribose-5-phosphate isomerase A (233 aa).

Substrate-binding positions include 28-31, 83-86, and 96-99; these read SGST, DGAD, and KGGG. The active-site Proton acceptor is glutamate 105. Lysine 123 serves as a coordination point for substrate.

It belongs to the ribose 5-phosphate isomerase family. As to quaternary structure, homodimer.

It carries out the reaction aldehydo-D-ribose 5-phosphate = D-ribulose 5-phosphate. Its pathway is carbohydrate degradation; pentose phosphate pathway; D-ribose 5-phosphate from D-ribulose 5-phosphate (non-oxidative stage): step 1/1. Its function is as follows. Catalyzes the reversible conversion of ribose-5-phosphate to ribulose 5-phosphate. This is Ribose-5-phosphate isomerase A from Maricaulis maris (strain MCS10) (Caulobacter maris).